The following is a 185-amino-acid chain: Serine/arginine-rich splicing factor RSZ21 (185 aa).

Residues 2-73 form the RRM domain; it reads ARLYVGNLDP…WRVELSRNSS (72 aa). The CCHC-type zinc finger occupies 86–103; sequence MKCYECGETGHFARECRL. Positions 104-185 are disordered; that stretch reads RIGPGGLGSG…DGGRYRRSRS (82 aa). The segment covering 113 to 123 has biased composition (basic residues); sequence GKRRSRSRSRS. Low complexity-rich tracts occupy residues 124 to 138 and 151 to 162; these read RSPQ…GRRS and VSPVRGRSYSRS.

Belongs to the splicing factor SR family. Post-translationally, extensively phosphorylated on serine residues in the RS domain. In terms of tissue distribution, expressed in roots, leaves and immature seeds.

The protein resides in the nucleus. In terms of biological role, involved in pre-mRNA splicing. The sequence is that of Serine/arginine-rich splicing factor RSZ21 (RSZP21) from Oryza sativa subsp. japonica (Rice).